Here is a 59-residue protein sequence, read N- to C-terminus: MAQPKKKTSKSRRNMRRSHDHVATPNVVYCECGEPIIPHRACSSCGSYKGRQVINSEDA.

Residues 1–19 (MAQPKKKTSKSRRNMRRSH) are compositionally biased toward basic residues. The segment at 1–20 (MAQPKKKTSKSRRNMRRSHD) is disordered.

Belongs to the bacterial ribosomal protein bL32 family.

The sequence is that of Large ribosomal subunit protein bL32 from Maridesulfovibrio salexigens (strain ATCC 14822 / DSM 2638 / NCIMB 8403 / VKM B-1763) (Desulfovibrio salexigens).